Reading from the N-terminus, the 223-residue chain is Cytidylate kinase (223 aa).

A disordered region spans residues 1-23 (MSTSPLVIAIDGPSGSGKSSTSR). 12–20 (GPSGSGKSS) provides a ligand contact to ATP.

Belongs to the cytidylate kinase family. Type 1 subfamily.

It localises to the cytoplasm. The catalysed reaction is CMP + ATP = CDP + ADP. The enzyme catalyses dCMP + ATP = dCDP + ADP. This is Cytidylate kinase from Cutibacterium acnes (strain DSM 16379 / KPA171202) (Propionibacterium acnes).